A 123-amino-acid chain; its full sequence is UPF0342 protein LAR_1202 (123 aa).

Belongs to the UPF0342 family.

This is UPF0342 protein LAR_1202 from Limosilactobacillus reuteri subsp. reuteri (strain JCM 1112) (Lactobacillus reuteri).